Here is a 432-residue protein sequence, read N- to C-terminus: Serine/threonine-protein kinase CDG1 (432 aa).

2 S-palmitoyl cysteine lipidation sites follow: cysteine 4 and cysteine 6. Residues 15 to 24 (LKDKSHKRSI) show a composition bias toward basic residues. The tract at residues 15-47 (LKDKSHKRSIRNQTSSSSAQPAGTAKEVDSSSS) is disordered. A compositionally biased stretch (polar residues) spans 25 to 35 (RNQTSSSSAQP). A phosphoserine mark is found at serine 44 and serine 47. A Protein kinase domain is found at 74 to 354 (FRNESLIGRG…SQVVECLKYI (281 aa)). ATP contacts are provided by residues 80-88 (IGRGGFGTV) and lysine 102. A Phosphotyrosine modification is found at tyrosine 147. Catalysis depends on aspartate 200, which acts as the Proton acceptor. Phosphoserine is present on residues serine 204 and serine 234. Residues threonine 235 and threonine 240 each carry the phosphothreonine modification. Residue tyrosine 248 is modified to Phosphotyrosine.

The protein belongs to the protein kinase superfamily. Ser/Thr protein kinase family. In terms of assembly, interacts with BSU1, BSL1 and BRI1. Post-translationally, phosphorylated at Ser-44, Ser-47 and Ser-234 by BRI1. In terms of tissue distribution, expressed at high levels in the stamen and pollen grains. Expressed at a very low level in vegetative tissues.

The protein resides in the cell membrane. The enzyme catalyses L-seryl-[protein] + ATP = O-phospho-L-seryl-[protein] + ADP + H(+). The catalysed reaction is L-threonyl-[protein] + ATP = O-phospho-L-threonyl-[protein] + ADP + H(+). Activated by phosphorylation at Ser-234. Serine/threonine-protein kinase involved in the positive regulation of brassinosteroid (BR) signaling and plant growth. Mediates BR signal transduction from BRI1 receptor kinase to BSU1 phosphatase. After activation by phosphorylation at Ser-234 by BRI1, CDG1 phosphorylates BSU1 at 'Ser-764' in the phosphatase domain, increasing the ability of BSU1 to inactivate the negative regulator of BR signaling ASK7/BIN2 by dephosphorylation at 'Tyr-200'. The full kinase activity of CDG1 is required for its biological function. In Arabidopsis thaliana (Mouse-ear cress), this protein is Serine/threonine-protein kinase CDG1.